A 1582-amino-acid polypeptide reads, in one-letter code: Adhesion G protein-coupled receptor B1 (1582 aa).

The signal sequence occupies residues 1-33; sequence MRGQAAAPGPIWILAPLLLLLLLLGRWARAASG. The Extracellular portion of the chain corresponds to 34–948; that stretch reads ADIGPGTEQC…ATMDKVTVPS (915 aa). N-linked (GlcNAc...) asparagine glycosylation is present at Asn64. The TSP type-1 1 domain occupies 261-315; the sequence is AGGWKLWSLWGECTRDCGGGLQTRTRTCLPTLGVEGGGCEGVLEEGRLCNRKACG. Cystine bridges form between Cys273/Cys309, Cys277/Cys314, and Cys288/Cys299. Residues 313-335 are disordered; the sequence is ACGPTGRSSSRSQSLRSTDARRR. Over residues 319 to 329 the composition is skewed to low complexity; that stretch reads RSSSRSQSLRS. 4 consecutive TSP type-1 domains span residues 354-407, 409-462, 467-520, and 522-575; these read DPAA…AVCP, HGAW…ALCP, DGNW…QQCP, and DGKW…QRCP. 14 disulfides stabilise this stretch: Cys366-Cys400, Cys370-Cys406, Cys381-Cys390, Cys421-Cys456, Cys425-Cys461, Cys436-Cys446, Cys479-Cys514, Cys483-Cys519, Cys494-Cys504, Cys534-Cys569, Cys538-Cys574, Cys549-Cys559, Cys581-Cys616, and Cys604-Cys634. Asn401 carries an N-linked (GlcNAc...) asparagine glycan. A glycan (N-linked (GlcNAc...) asparagine) is linked at Asn607. A Phosphothreonine modification is found at Thr609. N-linked (GlcNAc...) asparagine glycosylation is found at Asn692, Asn844, Asn877, and Asn881. The 180-residue stretch at 760–939 folds into the GAIN-B domain; it reads RDAYQVTDNL…AILAQLSADA (180 aa). Intrachain disulfides connect Cys884–Cys921 and Cys909–Cys923. Residues 884 to 939 form a GPS region; that stretch reads CILWDETDGPSSSAPPQLGPWSWRGCRTVPLDALRTRCLCDRLSTFAILAQLSADA. The N-terminal stalk following vasculostatin-120 cleavage which is not required for signaling activity stretch occupies residues 927-943; sequence STFAILAQLSADATMDK. Residues 949–969 form a helical membrane-spanning segment; that stretch reads VTLIVGCGVSSLTLLMLVIIY. Over 970 to 980 the chain is Cytoplasmic; that stretch reads VSVWRYIRSER. A helical membrane pass occupies residues 981–1001; the sequence is SVILINFCLSIISSNALILIG. Residues 1002-1008 are Extracellular-facing; that stretch reads QTQTRNK. A helical membrane pass occupies residues 1009–1029; that stretch reads VVCTLVAAFLHFFFLSSFCWV. Residues 1030–1052 lie on the Cytoplasmic side of the membrane; the sequence is LTEAWQSYMAVTGRLRSRLVRKR. A helical transmembrane segment spans residues 1053–1073; the sequence is FLCLGWGLPALVVAISVGFTK. Residues 1074-1093 lie on the Extracellular side of the membrane; it reads AKGYSTMNYCWLSLEGGLLY. Residues 1094 to 1114 form a helical membrane-spanning segment; sequence AFVGPAAAVVLVNMVIGILVF. Residues 1115–1136 are Cytoplasmic-facing; it reads NKLVSKDGITDKKLKERAGASL. The helical transmembrane segment at 1137 to 1157 threads the bilayer; it reads WSSCVVLPLLALTWMSAVLAV. Residues 1158–1166 are Extracellular-facing; that stretch reads TDRRSALFQ. A helical transmembrane segment spans residues 1167–1187; it reads ILFAVFDSLEGFVIVMVHCIL. At 1188-1582 the chain is on the cytoplasmic side; that stretch reads RREVQDAVKC…QDIIDLQTEV (395 aa). Positions 1363–1582 are involved in interaction with MAGI1; that stretch reads YSINIDQMPQ…QDIIDLQTEV (220 aa). Residues 1382 to 1549 form a disordered region; sequence PDASFPTRSP…AWVKKELEPL (168 aa). Positions 1389–1435 are enriched in pro residues; it reads RSPPAREPPGGAPPEVPPVQPPPPPPPPPPPPQQPIPPPPTLEPAPP. Low complexity predominate over residues 1441–1455; it reads GEPAAHPGPSSGAGA. Ser1467 carries the post-translational modification Phosphoserine. 2 stretches are compositionally biased toward basic and acidic residues: residues 1468–1484 and 1491–1520; these read LERRKSRYAELDFEKIM and QDMFQDLNRKLQHAAEKEKEVPGADSKPEK. The segment at 1579 to 1582 is indispensable for interaction with MAGI1; it reads QTEV.

The protein belongs to the G-protein coupled receptor 2 family. LN-TM7 subfamily. Interacts with ELMO1 and DOCK1. When bound to ELMO1 and DOCK1, acts as a module to promote apoptotic cell engulfment. Interacts with MDM2; the interaction results in inhibition of MDM2-mediated ubiquitination and degradation of DLG4/PSD95. Interacts with PARD3 and TIAM1; the interaction is required for correct dendritic localization of PARD3 and TIAM1 and for dendritic spine formation. Interacts with MAGI1, MAGI3 and BAIAP2. Interacts with PHYHIP. Interacts with DLG4 (via PDZ domain). Vasculostatin-120: Interacts with CD36. Vasculostatin-120: Interacts with ARRB2. Interacts with BAIAP3; this interaction is direct. In terms of processing, proteolytically cleaved to produce vasculostatin-40 and vasculostatin-120. Vasculostatin-40 is the major form and is produced through proteolytic cleavage by MMP14 between residues 321 and 329 with cleavage likely to be between Ser-326 and Leu-327. Ubiquitinated. In brain, widespread expression in all neuropil-rich zones including spinal cord gray matter, cerebellar molecular layer, cerebral cortex, thalamic nuclei and basal ganglia with no expression in white matter (at protein level). In the cerebellar molecular layer, highly expressed in interneuron processes whereas Purkinje cells and their dendrites show weaker expression (at protein level). In the olfactory bulb, highly expressed in glomeruli (at protein level). In the retina, highly concentrated in the outer and inner plexiform layers (at protein level). Expressed in brain. Enriched in hippocampus and cortex. Also detected in other tissues including bone marrow and spleen.

The protein localises to the cell membrane. It localises to the cell projection. The protein resides in the phagocytic cup. Its subcellular location is the cell junction. It is found in the focal adhesion. The protein localises to the dendritic spine. It localises to the postsynaptic density. The protein resides in the secreted. Functionally, phosphatidylserine receptor which enhances the engulfment of apoptotic cells. Also mediates the binding and engulfment of Gram-negative bacteria. Stimulates production of reactive oxygen species by macrophages in response to Gram-negative bacteria, resulting in enhanced microbicidal macrophage activity. In the gastric mucosa, required for recognition and engulfment of apoptotic gastric epithelial cells. Promotes myoblast fusion. Activates the Rho pathway in a G-protein-dependent manner. Inhibits MDM2-mediated ubiquitination and degradation of DLG4/PSD95, promoting DLG4 stability and regulating synaptic plasticity. Required for the formation of dendritic spines by ensuring the correct localization of PARD3 and TIAM1. Potent inhibitor of angiogenesis in brain and may play a significant role as a mediator of the p53/TP53 signal in suppression of glioblastoma. In terms of biological role, inhibits angiogenesis in a CD36-dependent manner. Inhibits angiogenesis. This chain is Adhesion G protein-coupled receptor B1, found in Mus musculus (Mouse).